The chain runs to 135 residues: Ribosome-binding factor A (135 aa).

This sequence belongs to the RbfA family. Monomer. Binds 30S ribosomal subunits, but not 50S ribosomal subunits or 70S ribosomes.

The protein localises to the cytoplasm. Its function is as follows. One of several proteins that assist in the late maturation steps of the functional core of the 30S ribosomal subunit. Associates with free 30S ribosomal subunits (but not with 30S subunits that are part of 70S ribosomes or polysomes). Required for efficient processing of 16S rRNA. May interact with the 5'-terminal helix region of 16S rRNA. The sequence is that of Ribosome-binding factor A from Bartonella tribocorum (strain CIP 105476 / IBS 506).